Reading from the N-terminus, the 216-residue chain is Octanoyltransferase (216 aa).

Positions 33 to 212 (AHTPDELWLV…ILSNILGLTA (180 aa)) constitute a BPL/LPL catalytic domain. Residues 72 to 79 (RGGQVTYH), 139 to 141 (SLG), and 152 to 154 (GVA) each bind substrate. Residue Cys170 is the Acyl-thioester intermediate of the active site.

Belongs to the LipB family.

Its subcellular location is the cytoplasm. It carries out the reaction octanoyl-[ACP] + L-lysyl-[protein] = N(6)-octanoyl-L-lysyl-[protein] + holo-[ACP] + H(+). It participates in protein modification; protein lipoylation via endogenous pathway; protein N(6)-(lipoyl)lysine from octanoyl-[acyl-carrier-protein]: step 1/2. Functionally, catalyzes the transfer of endogenously produced octanoic acid from octanoyl-acyl-carrier-protein onto the lipoyl domains of lipoate-dependent enzymes. Lipoyl-ACP can also act as a substrate although octanoyl-ACP is likely to be the physiological substrate. The chain is Octanoyltransferase from Saccharophagus degradans (strain 2-40 / ATCC 43961 / DSM 17024).